A 100-amino-acid polypeptide reads, in one-letter code: UPF0248 protein APE_0939 (100 aa).

Belongs to the UPF0248 family.

This chain is UPF0248 protein APE_0939, found in Aeropyrum pernix (strain ATCC 700893 / DSM 11879 / JCM 9820 / NBRC 100138 / K1).